The chain runs to 1234 residues: ATP-dependent helicase/nuclease subunit A (1234 aa).

Residues 2-475 (TQFTTSQQAA…IILAENFRST (474 aa)) form the UvrD-like helicase ATP-binding domain. 23–30 (ASAGSGKT) is an ATP binding site. The UvrD-like helicase C-terminal domain maps to 507–806 (YGALDYGDAH…KLMTIHKSKG (300 aa)).

Belongs to the helicase family. AddA subfamily. In terms of assembly, heterodimer of AddA and AddB/RexB. The cofactor is Mg(2+).

It carries out the reaction Couples ATP hydrolysis with the unwinding of duplex DNA by translocating in the 3'-5' direction.. It catalyses the reaction ATP + H2O = ADP + phosphate + H(+). Functionally, the heterodimer acts as both an ATP-dependent DNA helicase and an ATP-dependent, dual-direction single-stranded exonuclease. Recognizes the chi site generating a DNA molecule suitable for the initiation of homologous recombination. The AddA nuclease domain is required for chi fragment generation; this subunit has the helicase and 3' -&gt; 5' nuclease activities. The sequence is that of ATP-dependent helicase/nuclease subunit A from Lacticaseibacillus casei (strain BL23) (Lactobacillus casei).